Consider the following 328-residue polypeptide: D-alanine--D-alanine ligase (328 aa).

The 200-residue stretch at 118-317 folds into the ATP-grasp domain; it reads LSVLTKFNIP…MPQMLDNEIT (200 aa). Residue 146 to 201 coordinates ATP; the sequence is KKALGLPFFVKPNQSGSSLGVSKVDALDQLEKALEFAFAEDNEILIESYLNGTEVS. Mg(2+) is bound by residues aspartate 272, glutamate 284, and asparagine 286.

This sequence belongs to the D-alanine--D-alanine ligase family. Requires Mg(2+) as cofactor. It depends on Mn(2+) as a cofactor.

The protein localises to the cytoplasm. It catalyses the reaction 2 D-alanine + ATP = D-alanyl-D-alanine + ADP + phosphate + H(+). It functions in the pathway cell wall biogenesis; peptidoglycan biosynthesis. Cell wall formation. In Flavobacterium psychrophilum (strain ATCC 49511 / DSM 21280 / CIP 103535 / JIP02/86), this protein is D-alanine--D-alanine ligase.